The primary structure comprises 239 residues: Ribosomal RNA small subunit methyltransferase G (239 aa).

S-adenosyl-L-methionine is bound by residues Gly77, Phe82, 128 to 129 (AE), and Arg146. Residues 217-239 (RRQTSKKYPRKPGTPNKSPLVES) are disordered.

The protein belongs to the methyltransferase superfamily. RNA methyltransferase RsmG family.

The protein resides in the cytoplasm. Its function is as follows. Specifically methylates the N7 position of guanine in position 535 of 16S rRNA. The sequence is that of Ribosomal RNA small subunit methyltransferase G from Staphylococcus epidermidis (strain ATCC 12228 / FDA PCI 1200).